The primary structure comprises 180 residues: NADH-quinone oxidoreductase subunit I (180 aa).

2 4Fe-4S ferredoxin-type domains span residues 48–80 (IVLT…LQKA) and 90–119 (EFFR…LTPD). [4Fe-4S] cluster contacts are provided by cysteine 60, cysteine 63, cysteine 66, cysteine 70, cysteine 99, cysteine 102, cysteine 105, and cysteine 109. The span at 161 to 174 (KPKGDAEHEAKPID) shows a compositional bias: basic and acidic residues. Positions 161-180 (KPKGDAEHEAKPIDVKSLLP) are disordered.

It belongs to the complex I 23 kDa subunit family. NDH-1 is composed of 14 different subunits. Subunits NuoA, H, J, K, L, M, N constitute the membrane sector of the complex. Requires [4Fe-4S] cluster as cofactor.

It is found in the cell inner membrane. The enzyme catalyses a quinone + NADH + 5 H(+)(in) = a quinol + NAD(+) + 4 H(+)(out). NDH-1 shuttles electrons from NADH, via FMN and iron-sulfur (Fe-S) centers, to quinones in the respiratory chain. The immediate electron acceptor for the enzyme in this species is believed to be ubiquinone. Couples the redox reaction to proton translocation (for every two electrons transferred, four hydrogen ions are translocated across the cytoplasmic membrane), and thus conserves the redox energy in a proton gradient. In Aeromonas salmonicida (strain A449), this protein is NADH-quinone oxidoreductase subunit I.